We begin with the raw amino-acid sequence, 268 residues long: Tryptophan synthase alpha chain (268 aa).

Residues Glu-49 and Asp-60 each act as proton acceptor in the active site.

It belongs to the TrpA family. As to quaternary structure, tetramer of two alpha and two beta chains.

The enzyme catalyses (1S,2R)-1-C-(indol-3-yl)glycerol 3-phosphate + L-serine = D-glyceraldehyde 3-phosphate + L-tryptophan + H2O. It functions in the pathway amino-acid biosynthesis; L-tryptophan biosynthesis; L-tryptophan from chorismate: step 5/5. Functionally, the alpha subunit is responsible for the aldol cleavage of indoleglycerol phosphate to indole and glyceraldehyde 3-phosphate. This is Tryptophan synthase alpha chain from Escherichia coli O17:K52:H18 (strain UMN026 / ExPEC).